We begin with the raw amino-acid sequence, 95 residues long: Aspartyl/glutamyl-tRNA(Asn/Gln) amidotransferase subunit C (95 aa).

Belongs to the GatC family. In terms of assembly, heterotrimer of A, B and C subunits.

It catalyses the reaction L-glutamyl-tRNA(Gln) + L-glutamine + ATP + H2O = L-glutaminyl-tRNA(Gln) + L-glutamate + ADP + phosphate + H(+). The enzyme catalyses L-aspartyl-tRNA(Asn) + L-glutamine + ATP + H2O = L-asparaginyl-tRNA(Asn) + L-glutamate + ADP + phosphate + 2 H(+). Allows the formation of correctly charged Asn-tRNA(Asn) or Gln-tRNA(Gln) through the transamidation of misacylated Asp-tRNA(Asn) or Glu-tRNA(Gln) in organisms which lack either or both of asparaginyl-tRNA or glutaminyl-tRNA synthetases. The reaction takes place in the presence of glutamine and ATP through an activated phospho-Asp-tRNA(Asn) or phospho-Glu-tRNA(Gln). The polypeptide is Aspartyl/glutamyl-tRNA(Asn/Gln) amidotransferase subunit C (Cereibacter sphaeroides (strain ATCC 17025 / ATH 2.4.3) (Rhodobacter sphaeroides)).